A 117-amino-acid chain; its full sequence is Small ribosomal subunit protein bS6 (117 aa).

The interval 96–117 (HDEGPSVQMQKRDEREGRRERR) is disordered.

Belongs to the bacterial ribosomal protein bS6 family.

In terms of biological role, binds together with bS18 to 16S ribosomal RNA. The chain is Small ribosomal subunit protein bS6 from Jannaschia sp. (strain CCS1).